An 845-amino-acid chain; its full sequence is Protein translocase subunit SecA 1 (845 aa).

ATP is bound by residues glutamine 85, 103–107 (GEGKT), and aspartate 492.

The protein belongs to the SecA family. Monomer and homodimer. Part of the essential Sec protein translocation apparatus which comprises SecA, SecYEG and auxiliary proteins SecDF. Other proteins may also be involved.

It is found in the cell membrane. It localises to the cytoplasm. The catalysed reaction is ATP + H2O + cellular proteinSide 1 = ADP + phosphate + cellular proteinSide 2.. Functionally, part of the Sec protein translocase complex. Interacts with the SecYEG preprotein conducting channel. Has a central role in coupling the hydrolysis of ATP to the transfer of proteins into and across the cell membrane, serving as an ATP-driven molecular motor driving the stepwise translocation of polypeptide chains across the membrane. The protein is Protein translocase subunit SecA 1 of Corynebacterium glutamicum (strain ATCC 13032 / DSM 20300 / JCM 1318 / BCRC 11384 / CCUG 27702 / LMG 3730 / NBRC 12168 / NCIMB 10025 / NRRL B-2784 / 534).